The following is a 103-amino-acid chain: Large ribosomal subunit protein bL21 (103 aa).

Belongs to the bacterial ribosomal protein bL21 family. As to quaternary structure, part of the 50S ribosomal subunit. Contacts protein L20.

Its function is as follows. This protein binds to 23S rRNA in the presence of protein L20. The chain is Large ribosomal subunit protein bL21 from Salmonella schwarzengrund (strain CVM19633).